The primary structure comprises 113 residues: Colicin-E1 immunity protein (113 aa).

This protein is able to protect a cell, which harbors the plasmid ColE1 encoding colicin E1, against colicin E1. The chain is Colicin-E1 immunity protein (imm) from Escherichia coli.